An 857-amino-acid chain; its full sequence is Leucine--tRNA ligase (857 aa).

The 'HIGH' region motif lies at 42–52 (PYPSGRLHMGH). Residues 617-621 (KMSKS) carry the 'KMSKS' region motif. Lysine 620 contributes to the ATP binding site.

It belongs to the class-I aminoacyl-tRNA synthetase family.

The protein localises to the cytoplasm. The catalysed reaction is tRNA(Leu) + L-leucine + ATP = L-leucyl-tRNA(Leu) + AMP + diphosphate. In Vibrio parahaemolyticus serotype O3:K6 (strain RIMD 2210633), this protein is Leucine--tRNA ligase.